Reading from the N-terminus, the 129-residue chain is SPbeta prophage-derived protein NrdI (129 aa).

This sequence belongs to the NrdI family.

Its function is as follows. Probably involved in ribonucleotide reductase function. The sequence is that of SPbeta prophage-derived protein NrdI (nrdIB) from Bacillus subtilis (strain 168).